A 257-amino-acid polypeptide reads, in one-letter code: NAD-capped RNA hydrolase NudC (257 aa).

A substrate-binding site is contributed by Arg-69. The Zn(2+) site is built by Cys-98 and Cys-101. Glu-111 is a binding site for substrate. The Zn(2+) site is built by Cys-116 and Cys-119. Tyr-124 serves as a coordination point for substrate. One can recognise a Nudix hydrolase domain in the interval Pro-125 to Thr-248. A divalent metal cation contacts are provided by Ala-158, Glu-174, and Glu-178. The short motif at Gly-159 to Gly-180 is the Nudix box element. Gln-192 to Ser-199 lines the substrate pocket. Position 219 (Glu-219) interacts with a divalent metal cation. A substrate-binding site is contributed by Ala-241.

The protein belongs to the Nudix hydrolase family. NudC subfamily. Homodimer. Mg(2+) serves as cofactor. Requires Mn(2+) as cofactor. Zn(2+) is required as a cofactor.

It catalyses the reaction a 5'-end NAD(+)-phospho-ribonucleoside in mRNA + H2O = a 5'-end phospho-adenosine-phospho-ribonucleoside in mRNA + beta-nicotinamide D-ribonucleotide + 2 H(+). The enzyme catalyses NAD(+) + H2O = beta-nicotinamide D-ribonucleotide + AMP + 2 H(+). It carries out the reaction NADH + H2O = reduced beta-nicotinamide D-ribonucleotide + AMP + 2 H(+). Functionally, mRNA decapping enzyme that specifically removes the nicotinamide adenine dinucleotide (NAD) cap from a subset of mRNAs by hydrolyzing the diphosphate linkage to produce nicotinamide mononucleotide (NMN) and 5' monophosphate mRNA. The NAD-cap is present at the 5'-end of some mRNAs and stabilizes RNA against 5'-processing. Has preference for mRNAs with a 5'-end purine. Catalyzes the hydrolysis of a broad range of dinucleotide pyrophosphates. In Salmonella typhi, this protein is NAD-capped RNA hydrolase NudC.